The primary structure comprises 121 residues: Large ribosomal subunit protein bL12 (121 aa).

This sequence belongs to the bacterial ribosomal protein bL12 family. In terms of assembly, homodimer. Part of the ribosomal stalk of the 50S ribosomal subunit. Forms a multimeric L10(L12)X complex, where L10 forms an elongated spine to which 2 to 4 L12 dimers bind in a sequential fashion. Binds GTP-bound translation factors.

Functionally, forms part of the ribosomal stalk which helps the ribosome interact with GTP-bound translation factors. Is thus essential for accurate translation. The protein is Large ribosomal subunit protein bL12 of Clostridium perfringens (strain ATCC 13124 / DSM 756 / JCM 1290 / NCIMB 6125 / NCTC 8237 / Type A).